The sequence spans 202 residues: Small ribosomal subunit protein uS5 (202 aa).

The 64-residue stretch at 42–105 (LKDEVLKIMP…ILAKLSIVPV (64 aa)) folds into the S5 DRBM domain. At Thr192 the chain carries Phosphothreonine.

The protein belongs to the universal ribosomal protein uS5 family. In terms of assembly, component of the small ribosomal subunit. Interacts with zinc finger protein ZNF277 (via zinc-finger domains); the interaction is direct; the interaction is extra-ribosomal. Interaction with ZNF277 competes with the binding of RPS2 to protein arginine methyltransferase PRMT3. Citrullinated by PADI4 in the Arg/Gly-rich region. In terms of processing, asymmetric arginine dimethylation by PRMT3 occurs at multiple sites in the Arg/Gly-rich region. Post-translationally, monoubiquitinated by RNF10 when a ribosome has stalled during translation, leading to its degradation by the proteasome. Deubiquitinated by USP10, preventing degradation by the proteasome and promoting 40S ribosome subunit recycling following ribosome dissociation.

It is found in the cytoplasm. The protein localises to the nucleus. It localises to the nucleolus. Its function is as follows. Component of the ribosome, a large ribonucleoprotein complex responsible for the synthesis of proteins in the cell. The small ribosomal subunit (SSU) binds messenger RNAs (mRNAs) and translates the encoded message by selecting cognate aminoacyl-transfer RNA (tRNA) molecules. The large subunit (LSU) contains the ribosomal catalytic site termed the peptidyl transferase center (PTC), which catalyzes the formation of peptide bonds, thereby polymerizing the amino acids delivered by tRNAs into a polypeptide chain. The nascent polypeptides leave the ribosome through a tunnel in the LSU and interact with protein factors that function in enzymatic processing, targeting, and the membrane insertion of nascent chains at the exit of the ribosomal tunnel. Plays a role in the assembly and function of the 40S ribosomal subunit. Mutations in this protein affects the control of translational fidelity. Involved in nucleolar processing of pre-18S ribosomal RNA and ribosome assembly. The chain is Small ribosomal subunit protein uS5 (RPS2) from Cricetulus griseus (Chinese hamster).